The sequence spans 50 residues: DNA replication protein repEA (50 aa).

Its function is as follows. Involved in T4 DNA replication. Binds to ssDNA. The protein is DNA replication protein repEA (repEA) of Enterobacteria phage T4 (Bacteriophage T4).